A 349-amino-acid chain; its full sequence is Phosphoribosylformylglycinamidine cyclo-ligase (349 aa).

This sequence belongs to the AIR synthase family.

The protein resides in the cytoplasm. It catalyses the reaction 2-formamido-N(1)-(5-O-phospho-beta-D-ribosyl)acetamidine + ATP = 5-amino-1-(5-phospho-beta-D-ribosyl)imidazole + ADP + phosphate + H(+). It participates in purine metabolism; IMP biosynthesis via de novo pathway; 5-amino-1-(5-phospho-D-ribosyl)imidazole from N(2)-formyl-N(1)-(5-phospho-D-ribosyl)glycinamide: step 2/2. The polypeptide is Phosphoribosylformylglycinamidine cyclo-ligase (Lactobacillus delbrueckii subsp. bulgaricus (strain ATCC BAA-365 / Lb-18)).